The following is a 466-amino-acid chain: Muscarinic acetylcholine receptor M2 (466 aa).

Topologically, residues 1–22 are extracellular; sequence MNNSTNSSNSGLALTSPYKTFE. Residues N2, N3, and N6 are each glycosylated (N-linked (GlcNAc...) asparagine). A helical transmembrane segment spans residues 23–45; the sequence is VVFIVLVAGSLSLVTIIGNILVM. The Cytoplasmic portion of the chain corresponds to 46–59; it reads VSIKVNRHLQTVNN. The chain crosses the membrane as a helical span at residues 60–80; it reads YFLFSLACADLIIGVFSMNLY. At 81 to 97 the chain is on the extracellular side; that stretch reads TLYTVIGYWPLGPVVCD. C96 and C176 are joined by a disulfide. Residues 98-119 traverse the membrane as a helical segment; sequence LWLALDYVVSNASVMNLLIISF. Residues 120–122 carry the Important for signaling motif; the sequence is DRY. Over 120-139 the chain is Cytoplasmic; it reads DRYFCVTKPLTYPVKRTTKM. The chain crosses the membrane as a helical span at residues 140–162; sequence AGMMIAAAWVLSFILWAPAILFW. At 163-184 the chain is on the extracellular side; it reads QFIVGVRTVEDGECYIQFFSNA. Residues 185 to 209 traverse the membrane as a helical segment; the sequence is AVTFGTAIAAFYLPVIIMTVLYWHI. At 210-387 the chain is on the cytoplasmic side; that stretch reads SRASKSRIKK…PPSREKKVTR (178 aa). Positions 218-320 are disordered; it reads KKDKKEPVAN…SLGHSKDENS (103 aa). A Phosphoserine modification is found at S232. Over residues 254 to 270 the composition is skewed to basic and acidic residues; it reads ALEHNKIQNGKAPRDAV. 2 stretches are compositionally biased toward polar residues: residues 284–293 and 304–313; these read NDSTSVSAVA and DENTVSTSLG. A helical transmembrane segment spans residues 388-410; that stretch reads TILAILLAFIITWAPYNVMVLIN. The Extracellular segment spans residues 411-418; the sequence is TFCAPCIP. The cysteines at positions 413 and 416 are disulfide-linked. The chain crosses the membrane as a helical span at residues 419–442; the sequence is NTVWTIGYWLCYINSTINPACYAL. The short motif at 436 to 440 is the Important for signaling element; it reads NPACY. At 443-466 the chain is on the cytoplasmic side; it reads CNATFKKTFKHLLMCHYKNIGATR. Phosphothreonine is present on residues T446, T450, and T465.

Belongs to the G-protein coupled receptor 1 family. Muscarinic acetylcholine receptor subfamily. CHRM2 sub-subfamily. As to quaternary structure, interacts with ARRB1 and ARRB2. Interacts with RACK1; the interaction regulates CHRM2 internalization. Post-translationally, phosphorylated in response to agonist treatment.

Its subcellular location is the cell membrane. The protein resides in the postsynaptic cell membrane. The muscarinic acetylcholine receptor mediates various cellular responses, including inhibition of adenylate cyclase, breakdown of phosphoinositides and modulation of potassium channels through the action of G proteins. Primary transducing effect is adenylate cyclase inhibition. In Sus scrofa (Pig), this protein is Muscarinic acetylcholine receptor M2 (CHRM2).